The sequence spans 193 residues: Putative histone H2B type 2-C (193 aa).

Low complexity predominate over residues 1 to 12 (MPEPAKFAPAPK). The interval 1–33 (MPEPAKFAPAPKKGSKKAVTKAQKKDGKKRKRS) is disordered. The residue at position 2 (Pro2) is an N-acetylproline. Lys6 bears the N6-(2-hydroxyisobutyryl)lysine; alternate mark. N6-(beta-hydroxybutyryl)lysine; alternate occurs at positions 6 and 12. Residues Lys6, Lys12, and Lys13 each carry the N6-acetyllysine; alternate modification. The residue at position 6 (Lys6) is an N6-butyryllysine; alternate. An N6-crotonyllysine; alternate mark is found at Lys6, Lys12, and Lys13. Residues Lys6 and Lys12 each carry the N6-lactoyllysine; alternate modification. A Glycyl lysine isopeptide (Lys-Gly) (interchain with G-Cter in SUMO2); alternate cross-link involves residue Lys6. Position 13 is an N6-(2-hydroxyisobutyryl)lysine; alternate (Lys13). Residue Ser15 is modified to Phosphoserine; by STK4/MST1. 4 positions are modified to N6-acetyllysine; alternate: Lys16, Lys17, Lys21, and Lys24. N6-crotonyllysine; alternate occurs at positions 16, 17, 21, and 24. N6-lactoyllysine; alternate occurs at positions 16, 17, 21, and 24. Lys17 and Lys21 each carry N6-(beta-hydroxybutyryl)lysine; alternate. The residue at position 17 (Lys17) is an N6-glutaryllysine; alternate. N6-(2-hydroxyisobutyryl)lysine; alternate occurs at positions 21 and 24. Lys21 carries the N6-butyryllysine; alternate modification. Lys21 is covalently cross-linked (Glycyl lysine isopeptide (Lys-Gly) (interchain with G-Cter in SUMO2); alternate). Lys25 carries the post-translational modification N6-(2-hydroxyisobutyryl)lysine. An N6-(2-hydroxyisobutyryl)lysine; alternate modification is found at Lys35. Lys35 carries the N6-(beta-hydroxybutyryl)lysine; alternate modification. Lys35 is subject to N6-crotonyllysine; alternate. Lys35 is modified (N6-glutaryllysine; alternate). Lys35 bears the N6-succinyllysine; alternate mark. A Glycyl lysine isopeptide (Lys-Gly) (interchain with G-Cter in ubiquitin); alternate cross-link involves residue Lys35. Ser37 is subject to Phosphoserine; by AMPK. N6-(2-hydroxyisobutyryl)lysine; alternate is present on residues Lys44, Lys47, and Lys58. An N6-lactoyllysine; alternate modification is found at Lys44. Residues Lys44 and Lys47 each carry the N6-glutaryllysine; alternate modification. At Lys47 the chain carries N6-methyllysine; alternate. Residue Lys58 is modified to N6,N6-dimethyllysine; alternate. Position 80 is a dimethylated arginine (Arg80). An N6-(2-hydroxyisobutyryl)lysine; alternate modification is found at Lys86. Lys86 carries the N6-(beta-hydroxybutyryl)lysine; alternate modification. Lys86 bears the N6-acetyllysine; alternate mark. Position 86 is an N6-lactoyllysine; alternate (Lys86). Lys86 is subject to N6,N6,N6-trimethyllysine; alternate. Residues Arg87 and Arg93 each carry the omega-N-methylarginine modification. The interval 111 to 136 (PCPRAPRRSPSTPAPSESLPGPGARS) is disordered.

Belongs to the histone H2B family. The nucleosome is a histone octamer containing two molecules each of H2A, H2B, H3 and H4 assembled in one H3-H4 heterotetramer and two H2A-H2B heterodimers. The octamer wraps approximately 147 bp of DNA. In terms of processing, phosphorylation at Ser-37 (H2BS36ph) by AMPK in response to stress promotes transcription. Phosphorylated on Ser-15 (H2BS14ph) by STK4/MST1 during apoptosis; which facilitates apoptotic chromatin condensation. Also phosphorylated on Ser-15 in response to DNA double strand breaks (DSBs), and in correlation with somatic hypermutation and immunoglobulin class-switch recombination. Post-translationally, crotonylation (Kcr) is specifically present in male germ cells and marks testis-specific genes in post-meiotic cells, including X-linked genes that escape sex chromosome inactivation in haploid cells. Crotonylation marks active promoters and enhancers and confers resistance to transcriptional repressors. It is also associated with post-meiotically activated genes on autosomes. Lactylated in macrophages by EP300/P300 by using lactoyl-CoA directly derived from endogenous or exogenous lactate, leading to stimulates gene transcription.

It localises to the nucleus. The protein localises to the chromosome. In terms of biological role, core component of nucleosome. Nucleosomes wrap and compact DNA into chromatin, limiting DNA accessibility to the cellular machineries which require DNA as a template. Histones thereby play a central role in transcription regulation, DNA repair, DNA replication and chromosomal stability. DNA accessibility is regulated via a complex set of post-translational modifications of histones, also called histone code, and nucleosome remodeling. The protein is Putative histone H2B type 2-C of Homo sapiens (Human).